The sequence spans 691 residues: Elongation factor G (691 aa).

The 275-residue stretch at 8–282 folds into the tr-type G domain; that stretch reads DRVRNIGIAA…AVVDYLPAPI (275 aa). GTP-binding positions include 17–24, 81–85, and 135–138; these read AHIDAGKT, DTPGH, and NKMD.

Belongs to the TRAFAC class translation factor GTPase superfamily. Classic translation factor GTPase family. EF-G/EF-2 subfamily.

Its subcellular location is the cytoplasm. Catalyzes the GTP-dependent ribosomal translocation step during translation elongation. During this step, the ribosome changes from the pre-translocational (PRE) to the post-translocational (POST) state as the newly formed A-site-bound peptidyl-tRNA and P-site-bound deacylated tRNA move to the P and E sites, respectively. Catalyzes the coordinated movement of the two tRNA molecules, the mRNA and conformational changes in the ribosome. In Synechococcus sp. (strain RCC307), this protein is Elongation factor G.